Consider the following 443-residue polypeptide: Xaa-Pro dipeptidase (443 aa).

Residues D246, D257, H339, E384, and E423 each coordinate Mn(2+).

It belongs to the peptidase M24B family. Bacterial-type prolidase subfamily. Requires Mn(2+) as cofactor.

It carries out the reaction Xaa-L-Pro dipeptide + H2O = an L-alpha-amino acid + L-proline. Splits dipeptides with a prolyl residue in the C-terminal position. This is Xaa-Pro dipeptidase from Erwinia tasmaniensis (strain DSM 17950 / CFBP 7177 / CIP 109463 / NCPPB 4357 / Et1/99).